A 380-amino-acid chain; its full sequence is Dynactin subunit 2 (380 aa).

Residues 1–40 (MADPKFQNLPGIAYDQPDVYETPDDPETDTSDYYEEEPEN) are disordered. The segment covering 21-40 (ETPDDPETDTSDYYEEEPEN) has biased composition (acidic residues). Coiled coils occupy residues 100-135 (VQKC…QSYD) and 353-377 (ETFA…TAIS).

The protein belongs to the dynactin subunit 2 family. Subunit of dynactin, a multiprotein complex associated with dynein.

Its subcellular location is the cytoplasm. The protein localises to the cytoskeleton. It is found in the membrane. Functionally, modulates cytoplasmic dynein binding to an organelle, and plays a role in prometaphase chromosome alignment and spindle organization during mitosis. May play a role in synapse formation during brain development. The chain is Dynactin subunit 2 from Drosophila pseudoobscura pseudoobscura (Fruit fly).